The following is a 591-amino-acid chain: Aspartate--tRNA ligase (591 aa).

E173 provides a ligand contact to L-aspartate. An aspartate region spans residues 197–200 (QLFK). Residue R219 coordinates L-aspartate. ATP is bound by residues 219–221 (RDE) and Q228. Residue H448 participates in L-aspartate binding. An ATP-binding site is contributed by E482. R489 is a binding site for L-aspartate. 534–537 (GLDR) contacts ATP.

The protein belongs to the class-II aminoacyl-tRNA synthetase family. Type 1 subfamily. In terms of assembly, homodimer.

It localises to the cytoplasm. It carries out the reaction tRNA(Asp) + L-aspartate + ATP = L-aspartyl-tRNA(Asp) + AMP + diphosphate. Its function is as follows. Catalyzes the attachment of L-aspartate to tRNA(Asp) in a two-step reaction: L-aspartate is first activated by ATP to form Asp-AMP and then transferred to the acceptor end of tRNA(Asp). The sequence is that of Aspartate--tRNA ligase from Shewanella amazonensis (strain ATCC BAA-1098 / SB2B).